A 257-amino-acid chain; its full sequence is MAHSQVGIQLISESTEKTLAELIALCAEHNIIHNEKSPLALVQTDDRLELRKLDEPKLGAVYVDFVGGTMAHRRKFGGGRGEAVAKAVGIKGSALPTVIDATAGLGRDAFVLAAIGCQVRLVERHPVVFLLLQDGLNRAYQDEEIGEMLQQNLHLLNVQHINELDPNSDYADVVYLDPMYPHKQKSALVKKEMRVFQHLVGADLDADELLLPALQLAKKRVVVKRPDYAEFLCGKQPHFSRETKNHRFDIYMGASQC.

S-adenosyl-L-methionine is bound by residues 107 to 108 (RD), 123 to 124 (ER), and aspartate 177.

This sequence belongs to the methyltransferase superfamily. RsmJ family.

The protein resides in the cytoplasm. It catalyses the reaction guanosine(1516) in 16S rRNA + S-adenosyl-L-methionine = N(2)-methylguanosine(1516) in 16S rRNA + S-adenosyl-L-homocysteine + H(+). Its function is as follows. Specifically methylates the guanosine in position 1516 of 16S rRNA. The protein is Ribosomal RNA small subunit methyltransferase J of Haemophilus influenzae (strain 86-028NP).